The sequence spans 217 residues: ATP phosphoribosyltransferase (217 aa).

This sequence belongs to the ATP phosphoribosyltransferase family. Short subfamily. As to quaternary structure, heteromultimer composed of HisG and HisZ subunits.

Its subcellular location is the cytoplasm. The catalysed reaction is 1-(5-phospho-beta-D-ribosyl)-ATP + diphosphate = 5-phospho-alpha-D-ribose 1-diphosphate + ATP. Its pathway is amino-acid biosynthesis; L-histidine biosynthesis; L-histidine from 5-phospho-alpha-D-ribose 1-diphosphate: step 1/9. Catalyzes the condensation of ATP and 5-phosphoribose 1-diphosphate to form N'-(5'-phosphoribosyl)-ATP (PR-ATP). Has a crucial role in the pathway because the rate of histidine biosynthesis seems to be controlled primarily by regulation of HisG enzymatic activity. This chain is ATP phosphoribosyltransferase, found in Syntrophomonas wolfei subsp. wolfei (strain DSM 2245B / Goettingen).